Here is a 582-residue protein sequence, read N- to C-terminus: Urocanate reductase (582 aa).

The first 20 residues, 1 to 20, serve as a signal peptide directing secretion; sequence MHYKKSIIGIAVTATAIIAG. Cys21 is lipidated: N-palmitoyl cysteine. A lipid anchor (S-diacylglycerol cysteine) is attached at Cys21. Residue Thr93 is modified to FMN phosphoryl threonine. Ala143, Glu162, Asn170, Ser171, Gly175, Ala176, Ala285, and Asp352 together coordinate FAD. Residue Arg411 is the Proton donor of the active site. 3 residues coordinate FAD: His521, Glu550, and Ala565.

It belongs to the FAD-dependent oxidoreductase 2 family. FRD/SDH subfamily. It depends on FAD as a cofactor. The cofactor is FMN.

Its subcellular location is the cell membrane. The enzyme catalyses dihydrourocanate + A = urocanate + AH2. Its function is as follows. Catalyzes the two-electron reduction of urocanate to dihydrourocanate (also named imidazole propionate or deamino-histidine). The physiological electron donor is unknown; it might be the membrane-bound tetraheme cytochrome c (CymA). Enables anaerobic growth with urocanate as a sole terminal electron acceptor, and thus can provide the cells with a niche where no other bacteria can compete and survive. Is unable to reduce cinnamate and other unsaturated organic acids such as acrylic, crotonic, fumaric and orotic acids. Has no fumarate reductase or succinate dehydrogenase activity. This chain is Urocanate reductase (urdA), found in Shewanella oneidensis (strain ATCC 700550 / JCM 31522 / CIP 106686 / LMG 19005 / NCIMB 14063 / MR-1).